The sequence spans 148 residues: Large ribosomal subunit protein bL9 (148 aa).

Belongs to the bacterial ribosomal protein bL9 family.

Functionally, binds to the 23S rRNA. The protein is Large ribosomal subunit protein bL9 of Acetivibrio thermocellus (strain ATCC 27405 / DSM 1237 / JCM 9322 / NBRC 103400 / NCIMB 10682 / NRRL B-4536 / VPI 7372) (Clostridium thermocellum).